The following is an 811-amino-acid chain: Lysine-specific histone demethylase 1 homolog 3 (811 aa).

Residues 1-10 are compositionally biased toward pro residues; sequence MSDQPPPYTP. Positions 1-79 are disordered; the sequence is MSDQPPPYTP…PSAQPPPRAS (79 aa). Basic residues predominate over residues 44-55; that stretch reads NKRKRTGFRRKL. Residues 56–71 show a composition bias toward low complexity; that stretch reads PSGSPAAPVAVAASPS. Residues 88 to 189 form the SWIRM domain; sequence NREPTAEAVT…FGVAPAIKER (102 aa). Residues E227, R229, R235, and E609 each contribute to the FAD site. The tract at residues 790–811 is disordered; it reads RNSSRTKTRPSKLKIGIPKSKS.

The protein belongs to the flavin monoamine oxidase family. FAD serves as cofactor.

Probable histone demethylase. The polypeptide is Lysine-specific histone demethylase 1 homolog 3 (Oryza sativa subsp. japonica (Rice)).